Reading from the N-terminus, the 479-residue chain is Anaerobic nitric oxide reductase flavorubredoxin (479 aa).

Residues 30–210 (LRGSSYNSYL…PFSRLVTPKI (181 aa)) are zinc metallo-hydrolase. Residues His-79, Glu-81, Asp-83, His-147, Asp-166, and His-227 each contribute to the Fe cation site. Residues 254 to 393 (ITIFYDTMSN…LCREHGREIA (140 aa)) form the Flavodoxin-like domain. Residues 260–264 (TMSNN) and 342–369 (AFGS…EMSL) each bind FMN. The Rubredoxin-like domain occupies 423 to 474 (GPRMQCSVCQWIYDPAKGEPMQDVAPGTPWSEVPDNFLCPECSLGKDVFDEL). Fe cation is bound by residues Cys-428, Cys-431, Cys-461, and Cys-464.

It in the N-terminal section; belongs to the zinc metallo-hydrolase group 3 family. As to quaternary structure, homotetramer. Fe cation is required as a cofactor. The cofactor is FMN.

It localises to the cytoplasm. Its pathway is nitrogen metabolism; nitric oxide reduction. Its function is as follows. Anaerobic nitric oxide reductase; uses NADH to detoxify nitric oxide (NO), protecting several 4Fe-4S NO-sensitive enzymes. Has at least 2 reductase partners, only one of which (NorW, flavorubredoxin reductase) has been identified. NO probably binds to the di-iron center; electrons enter from the NorW at rubredoxin and are transferred sequentially to the FMN center and the di-iron center. Also able to function as an aerobic oxygen reductase. In Shigella flexneri serotype 5b (strain 8401), this protein is Anaerobic nitric oxide reductase flavorubredoxin.